We begin with the raw amino-acid sequence, 189 residues long: UPF0398 protein lhv_1265 (189 aa).

It belongs to the UPF0398 family.

The sequence is that of UPF0398 protein lhv_1265 from Lactobacillus helveticus (strain DPC 4571).